A 102-amino-acid chain; its full sequence is FMRFamide-like neuropeptides 9 (102 aa).

Residues 1 to 19 (MNQFYALFLVACIAAMANA) form the signal peptide. A propeptide spanning residues 20-63 (YEEPDLDALAEFCGKESNRKYCDQIAQLATQHAIGINQEQVRME) is cleaved from the precursor. F72 carries the phenylalanine amide modification. Residues 75–90 (RSGYPLVIDDEEMRMD) constitute a propeptide that is removed on maturation. F99 bears the Phenylalanine amide mark.

Belongs to the FARP (FMRFamide related peptide) family. In terms of tissue distribution, each flp gene is expressed in a distinct set of neurons.

It localises to the secreted. Its function is as follows. FMRFamides and FMRFamide-like peptides are neuropeptides. Functionally, KPSFVRF-amide: Has no effect on somatic body wall muscle, inhibits contraction of vaginal vera muscle, and inhibits the activity of the dissected pharyngeal myogenic muscle system. Acts as a ligand for the npr-22 receptor in vitro. This is FMRFamide-like neuropeptides 9 from Caenorhabditis elegans.